The primary structure comprises 169 residues: S-ribosylhomocysteine lyase (169 aa).

Residues histidine 54, histidine 58, and cysteine 128 each coordinate Fe cation.

It belongs to the LuxS family. Homodimer. Fe cation is required as a cofactor.

The catalysed reaction is S-(5-deoxy-D-ribos-5-yl)-L-homocysteine = (S)-4,5-dihydroxypentane-2,3-dione + L-homocysteine. Its function is as follows. Involved in the synthesis of autoinducer 2 (AI-2) which is secreted by bacteria and is used to communicate both the cell density and the metabolic potential of the environment. The regulation of gene expression in response to changes in cell density is called quorum sensing. Catalyzes the transformation of S-ribosylhomocysteine (RHC) to homocysteine (HC) and 4,5-dihydroxy-2,3-pentadione (DPD). The sequence is that of S-ribosylhomocysteine lyase from Shewanella halifaxensis (strain HAW-EB4).